Reading from the N-terminus, the 668-residue chain is tRNA 5-methylaminomethyl-2-thiouridine biosynthesis bifunctional protein MnmC (668 aa).

The tract at residues 1–245 is tRNA (mnm(5)s(2)U34)-methyltransferase; that stretch reads MKHYSIQPAN…KREMLCGVME (245 aa). The segment at 270-668 is FAD-dependent cmnm(5)s(2)U34 oxidoreductase; that stretch reads IGGGIASALL…LLKGKAVKAG (399 aa).

It in the N-terminal section; belongs to the methyltransferase superfamily. tRNA (mnm(5)s(2)U34)-methyltransferase family. The protein in the C-terminal section; belongs to the DAO family. FAD is required as a cofactor.

The protein resides in the cytoplasm. It catalyses the reaction 5-aminomethyl-2-thiouridine(34) in tRNA + S-adenosyl-L-methionine = 5-methylaminomethyl-2-thiouridine(34) in tRNA + S-adenosyl-L-homocysteine + H(+). In terms of biological role, catalyzes the last two steps in the biosynthesis of 5-methylaminomethyl-2-thiouridine (mnm(5)s(2)U) at the wobble position (U34) in tRNA. Catalyzes the FAD-dependent demodification of cmnm(5)s(2)U34 to nm(5)s(2)U34, followed by the transfer of a methyl group from S-adenosyl-L-methionine to nm(5)s(2)U34, to form mnm(5)s(2)U34. This chain is tRNA 5-methylaminomethyl-2-thiouridine biosynthesis bifunctional protein MnmC, found in Shigella flexneri serotype 5b (strain 8401).